Here is a 120-residue protein sequence, read N- to C-terminus: Large ribosomal subunit protein uL14 (120 aa).

Belongs to the universal ribosomal protein uL14 family. Part of the 50S ribosomal subunit. Forms a cluster with proteins L3 and L19. In the 70S ribosome, L14 and L19 interact and together make contacts with the 16S rRNA in bridges B5 and B8.

Binds to 23S rRNA. Forms part of two intersubunit bridges in the 70S ribosome. The sequence is that of Large ribosomal subunit protein uL14 from Dictyoglomus turgidum (strain DSM 6724 / Z-1310).